Reading from the N-terminus, the 330-residue chain is Protein qutG (330 aa).

E78, D100, L102, D103, and D251 together coordinate Mg(2+). Position 78 (E78) interacts with substrate. Residues 102–105 and D251 each bind substrate; that span reads LDGT.

It belongs to the inositol monophosphatase superfamily.

Functionally, not known. Probably involved in quinate metabolism. The polypeptide is Protein qutG (qutG) (Emericella nidulans (strain FGSC A4 / ATCC 38163 / CBS 112.46 / NRRL 194 / M139) (Aspergillus nidulans)).